The following is a 161-amino-acid chain: MKTVIYPGTFDPITNGHLDIIERTAVLFPQVIVAVAASPTKKPLFDLQDRVQLAEESVAHLPNVRVIGFSGLLADAVKEHDITAIIRGMRTTMDFEYELQLAHLNRVLSQGVESLFLPSTEQWSYVSSTIVREIYLHNGNVDQFVPPPVLNALNRRRKADA.

Threonine 9 contributes to the substrate binding site. ATP-binding positions include 9-10 (TF) and histidine 17. The substrate site is built by lysine 41, leucine 73, and arginine 87. ATP contacts are provided by residues 88-90 (GMR), glutamate 98, and 123-129 (WSYVSST).

The protein belongs to the bacterial CoaD family. In terms of assembly, homohexamer. It depends on Mg(2+) as a cofactor.

Its subcellular location is the cytoplasm. It carries out the reaction (R)-4'-phosphopantetheine + ATP + H(+) = 3'-dephospho-CoA + diphosphate. Its pathway is cofactor biosynthesis; coenzyme A biosynthesis; CoA from (R)-pantothenate: step 4/5. In terms of biological role, reversibly transfers an adenylyl group from ATP to 4'-phosphopantetheine, yielding dephospho-CoA (dPCoA) and pyrophosphate. The sequence is that of Phosphopantetheine adenylyltransferase from Actinobacillus succinogenes (strain ATCC 55618 / DSM 22257 / CCUG 43843 / 130Z).